A 496-amino-acid polypeptide reads, in one-letter code: Probable cytosol aminopeptidase (496 aa).

Positions 251 and 256 each coordinate Mn(2+). The active site involves lysine 263. Residues aspartate 274, aspartate 333, and glutamate 335 each contribute to the Mn(2+) site. Residue arginine 337 is part of the active site.

This sequence belongs to the peptidase M17 family. Mn(2+) is required as a cofactor.

The protein localises to the cytoplasm. The catalysed reaction is Release of an N-terminal amino acid, Xaa-|-Yaa-, in which Xaa is preferably Leu, but may be other amino acids including Pro although not Arg or Lys, and Yaa may be Pro. Amino acid amides and methyl esters are also readily hydrolyzed, but rates on arylamides are exceedingly low.. It carries out the reaction Release of an N-terminal amino acid, preferentially leucine, but not glutamic or aspartic acids.. In terms of biological role, presumably involved in the processing and regular turnover of intracellular proteins. Catalyzes the removal of unsubstituted N-terminal amino acids from various peptides. The sequence is that of Probable cytosol aminopeptidase from Acidovorax ebreus (strain TPSY) (Diaphorobacter sp. (strain TPSY)).